Consider the following 697-residue polypeptide: Colicin-D (697 aa).

The short motif at 17–24 (HSMVVWPS) is the TonB box element.

It belongs to the cloacin colicin family.

Functionally, colicins are polypeptide toxins produced by and active against E.coli and closely related bacteria. In terms of biological role, colicin D inhibits protein synthesis. The protein is Colicin-D (cda) of Escherichia coli.